The chain runs to 270 residues: Urease accessory protein UreD (270 aa).

This sequence belongs to the UreD family. UreD, UreF and UreG form a complex that acts as a GTP-hydrolysis-dependent molecular chaperone, activating the urease apoprotein by helping to assemble the nickel containing metallocenter of UreC. The complex may form in the order UreABCD, UreABCDF, UreABCDFG. The UreE protein probably delivers the nickel in a GTPase-dependent fashion.

The protein localises to the cytoplasm. Necessary for the functional incorporation of the urease nickel metallocenter. The polypeptide is Urease accessory protein UreD (Klebsiella aerogenes (Enterobacter aerogenes)).